The following is a 710-amino-acid chain: Polyribonucleotide nucleotidyltransferase (710 aa).

Residues aspartate 489 and aspartate 495 each contribute to the Mg(2+) site. In terms of domain architecture, KH spans 556-615 (PKIDTIKIDVDKIKVVIGKGGETIDKIIAETGVKIDIDDEGNVSIYSSDQAAIDRTKEII). The S1 motif domain maps to 625–693 (GEVYHAKVIR…EKGRVDASMK (69 aa)). The tract at residues 691-710 (SMKALIPRPPKPEKKEEKHD) is disordered. A compositionally biased stretch (basic and acidic residues) spans 700 to 710 (PKPEKKEEKHD).

This sequence belongs to the polyribonucleotide nucleotidyltransferase family. It depends on Mg(2+) as a cofactor.

The protein resides in the cytoplasm. It catalyses the reaction RNA(n+1) + phosphate = RNA(n) + a ribonucleoside 5'-diphosphate. In terms of biological role, involved in mRNA degradation. Catalyzes the phosphorolysis of single-stranded polyribonucleotides processively in the 3'- to 5'-direction. The sequence is that of Polyribonucleotide nucleotidyltransferase from Streptococcus pyogenes serotype M18 (strain MGAS8232).